Here is a 289-residue protein sequence, read N- to C-terminus: Shikimate dehydrogenase (NADP(+)) (289 aa).

Shikimate contacts are provided by residues 20-22 (SIS) and Ser67. The active-site Proton acceptor is the Lys71. Shikimate is bound by residues Asn92 and Asp107. NADP(+)-binding positions include 132–136 (GGGGA) and Val230. Tyr232 serves as a coordination point for shikimate. Position 253 (Gly253) interacts with NADP(+).

This sequence belongs to the shikimate dehydrogenase family. As to quaternary structure, homodimer.

The enzyme catalyses shikimate + NADP(+) = 3-dehydroshikimate + NADPH + H(+). It functions in the pathway metabolic intermediate biosynthesis; chorismate biosynthesis; chorismate from D-erythrose 4-phosphate and phosphoenolpyruvate: step 4/7. Involved in the biosynthesis of the chorismate, which leads to the biosynthesis of aromatic amino acids. Catalyzes the reversible NADPH linked reduction of 3-dehydroshikimate (DHSA) to yield shikimate (SA). This is Shikimate dehydrogenase (NADP(+)) from Streptococcus mutans serotype c (strain ATCC 700610 / UA159).